Consider the following 1550-residue polypeptide: Protein TIME FOR COFFEE (1550 aa).

10 disordered regions span residues 1–191 (MDRN…PVSP), 207–304 (VPRK…PVAV), 325–505 (TSKQ…SERG), 708–736 (QGSV…TAQR), 779–805 (RPPN…SATP), 859–1023 (FNGS…KAGV), 1086–1130 (ASLE…QSIA), 1163–1196 (ALPQ…SQQP), 1213–1296 (AASA…SVAA), and 1321–1435 (NSKP…PKHG). Basic and acidic residues predominate over residues 43–80 (EAARLRDRGGSNKKDRDRERDRDRERERERDRERDRLN). Residues 100–118 (DGGDDSSEESVNDDEEYDD) show a composition bias toward acidic residues. Residues 134–151 (SNNISAASFSSSLSNHHN) show a composition bias toward low complexity. Residues 157–171 (LHHHHHSHNNNHQRK) are compositionally biased toward basic residues. Residues 241–250 (RQISSTSPAN) are compositionally biased toward polar residues. Low complexity predominate over residues 292-301 (KSSSSKLSSP). Residues 348-366 (RVSSPISNPQTLPQSSITL) are compositionally biased toward polar residues. The segment covering 367-379 (AANSSSSNVSAIA) has biased composition (low complexity). A compositionally biased stretch (polar residues) spans 409 to 432 (SKSQVPFSNQLKSSGSGEGNSSVL). 2 stretches are compositionally biased toward basic and acidic residues: residues 447 to 461 (DSEK…DETI) and 473 to 490 (SDGE…KFEI). Polar residues-rich tracts occupy residues 713-736 (GRSS…TAQR), 783-803 (SGIT…SASA), and 884-992 (LTGQ…NLGL). Residues 1112-1126 (SGGGAIGKTSGGNGG) are compositionally biased toward gly residues. Polar residues predominate over residues 1164–1173 (LPQSSGSLPT). Positions 1174–1195 (SHHQQLLQQQQQQHMQRSQSQQ) are enriched in low complexity. Residues 1234 to 1253 (NMTTSPAGTTKFANANSGFP) show a composition bias toward polar residues. The segment covering 1254 to 1273 (QNLVQSSSNQVQSQQWKNNS) has biased composition (low complexity). Composition is skewed to polar residues over residues 1274–1296 (PRTT…SVAA), 1321–1342 (NSKP…NHQA), and 1351–1360 (SPSTSSVSKN). The span at 1361–1382 (ASGSPRTTASASSAANKGGQAS) shows a compositional bias: low complexity. 2 stretches are compositionally biased toward polar residues: residues 1383–1397 (TTTH…NLQP) and 1405–1419 (GGRN…NPTT). The span at 1420 to 1435 (SSGSKSQQQQQLPKHG) shows a compositional bias: low complexity.

As to quaternary structure, interacts with MYC2.

It is found in the nucleus. Regulator of normal clock function. Acts in the mid to late night. Contributes to the amplitude of circadian clocks. May act on the transcriptional induction of LATE ELONGATED HYPOCOTYL (LHY). Inhibits MYC2 protein accumulation, acting as a negative factor in the JA-signaling pathway. The sequence is that of Protein TIME FOR COFFEE (TIC) from Arabidopsis thaliana (Mouse-ear cress).